Reading from the N-terminus, the 658-residue chain is Methionine--tRNA ligase (658 aa).

The 'HIGH' region motif lies at 9–19 (PYANGKAHVGH). The Zn(2+) site is built by Cys140, Cys143, Cys152, and Cys156. The short motif at 322–326 (TFSKS) is the 'KMSKS' region element. ATP is bound at residue Lys325. The tRNA-binding domain maps to 558–658 (DFQKLDIRIG…KEVEPGTRVC (101 aa)).

This sequence belongs to the class-I aminoacyl-tRNA synthetase family. MetG type 1 subfamily. In terms of assembly, homodimer. Zn(2+) is required as a cofactor.

It is found in the cytoplasm. It carries out the reaction tRNA(Met) + L-methionine + ATP = L-methionyl-tRNA(Met) + AMP + diphosphate. Functionally, is required not only for elongation of protein synthesis but also for the initiation of all mRNA translation through initiator tRNA(fMet) aminoacylation. This Archaeoglobus fulgidus (strain ATCC 49558 / DSM 4304 / JCM 9628 / NBRC 100126 / VC-16) protein is Methionine--tRNA ligase.